Here is a 165-residue protein sequence, read N- to C-terminus: MITKLIPKKVFFTSGAGTHPEKLESFEAALRDACIEKFNLVTVSSILPPRCEIVTKEEGLKELSPGEIVFCVMSRISSNDPGKTLTSSVGCALPVDISKHGYISEYHAYEESAQDAGAHAVKLAESMYSTWTKEEPLKTFSIPRSSTVKDSGDWMTVISAAVFVI.

At Ser-45 the chain carries Pyruvic acid (Ser).

The protein belongs to the PdaD family. Requires pyruvate as cofactor.

The enzyme catalyses L-arginine + H(+) = agmatine + CO2. In Methanosarcina mazei (strain ATCC BAA-159 / DSM 3647 / Goe1 / Go1 / JCM 11833 / OCM 88) (Methanosarcina frisia), this protein is Pyruvoyl-dependent arginine decarboxylase 1 (pdaD1).